The sequence spans 255 residues: Ribosomal RNA small subunit methyltransferase A (255 aa).

6 residues coordinate S-adenosyl-L-methionine: N12, L14, G39, E60, D84, and N106.

It belongs to the class I-like SAM-binding methyltransferase superfamily. rRNA adenine N(6)-methyltransferase family. RsmA subfamily.

The protein localises to the cytoplasm. The enzyme catalyses adenosine(1518)/adenosine(1519) in 16S rRNA + 4 S-adenosyl-L-methionine = N(6)-dimethyladenosine(1518)/N(6)-dimethyladenosine(1519) in 16S rRNA + 4 S-adenosyl-L-homocysteine + 4 H(+). Specifically dimethylates two adjacent adenosines (A1518 and A1519) in the loop of a conserved hairpin near the 3'-end of 16S rRNA in the 30S particle. May play a critical role in biogenesis of 30S subunits. This is Ribosomal RNA small subunit methyltransferase A from Herminiimonas arsenicoxydans.